Consider the following 521-residue polypeptide: 2-isopropylmalate synthase (521 aa).

Residues Val5–His267 enclose the Pyruvate carboxyltransferase domain. Mn(2+) contacts are provided by Asp14, His202, His204, and Asn238. Residues Lys392–Leu521 are regulatory domain.

This sequence belongs to the alpha-IPM synthase/homocitrate synthase family. LeuA type 1 subfamily. In terms of assembly, homodimer. It depends on Mn(2+) as a cofactor.

It localises to the cytoplasm. It catalyses the reaction 3-methyl-2-oxobutanoate + acetyl-CoA + H2O = (2S)-2-isopropylmalate + CoA + H(+). It participates in amino-acid biosynthesis; L-leucine biosynthesis; L-leucine from 3-methyl-2-oxobutanoate: step 1/4. Its function is as follows. Catalyzes the condensation of the acetyl group of acetyl-CoA with 3-methyl-2-oxobutanoate (2-ketoisovalerate) to form 3-carboxy-3-hydroxy-4-methylpentanoate (2-isopropylmalate). This Tolumonas auensis (strain DSM 9187 / NBRC 110442 / TA 4) protein is 2-isopropylmalate synthase.